Consider the following 321-residue polypeptide: Cytochrome c biogenesis protein CcsA (321 aa).

Helical transmembrane passes span 17–37 (IVSIVITIHLITLLVDEIVGL), 44–64 (GMISTFLCITGLLVTRWIYSG), 71–91 (LYESLIFLSWSFSIIHMIPYF), 98–118 (LSLVTAPSAIFTQGFATSGLL), 143–163 (MVLSYGALLCGSLLSVALLVI), 225–245 (VISLGFIFLTIGILSGAVWAN), 258–275 (ETWAFITWTIFAIYLHTR), and 286–306 (AIVASIGFIIIWICYFGVNLL).

The protein belongs to the CcmF/CycK/Ccl1/NrfE/CcsA family. May interact with Ccs1.

It is found in the plastid. It localises to the chloroplast thylakoid membrane. In terms of biological role, required during biogenesis of c-type cytochromes (cytochrome c6 and cytochrome f) at the step of heme attachment. The protein is Cytochrome c biogenesis protein CcsA of Buxus microphylla (Littleleaf boxwood).